We begin with the raw amino-acid sequence, 665 residues long: Protein Fe65 homolog (665 aa).

A compositionally biased stretch (basic and acidic residues) spans 1–12 (MREGTPRVRIEV). 2 disordered regions span residues 1 to 43 (MREG…DTAT) and 90 to 111 (SRGY…RRRN). Polar residues predominate over residues 14-24 (KGSNRPSQFVS). 2 stretches are compositionally biased toward basic and acidic residues: residues 27 to 40 (EEQR…RDSD) and 102 to 111 (GRREEERRRN). Residues 233-266 (KDLPPGWEKHEDPQGYSYYWHVDSGTIQRQPPPP) enclose the WW domain. PID domains lie at 330–456 (VRFA…RDIC) and 499–615 (FLGV…VLDA).

As to quaternary structure, interacts (via PID 2 domain) with apl-1 (via cytoplasmic domain). Phosphorylated. As to expression, expressed in the pharynx (including pharyngeal muscle and nerve cells), ventral nerve cord and tail neurons.

It localises to the cytoplasm. The protein localises to the cytoskeleton. Functionally, modulates pharyngeal pumping activity, at least in part by regulating expression of the acetylcholinesterase genes ace-1 and ace-2. This is Protein Fe65 homolog from Caenorhabditis elegans.